A 66-amino-acid polypeptide reads, in one-letter code: MPKMKTHRASAKRFKRTGNGGLKRHHAFTGHRFHGKTKKQRRHLRKAAMVSRSDLKRIKQMLSQMR.

Residues 1–46 (MPKMKTHRASAKRFKRTGNGGLKRHHAFTGHRFHGKTKKQRRHLRK) are compositionally biased toward basic residues. Residues 1-50 (MPKMKTHRASAKRFKRTGNGGLKRHHAFTGHRFHGKTKKQRRHLRKAAMV) form a disordered region.

Belongs to the bacterial ribosomal protein bL35 family.

This Lactobacillus delbrueckii subsp. bulgaricus (strain ATCC 11842 / DSM 20081 / BCRC 10696 / JCM 1002 / NBRC 13953 / NCIMB 11778 / NCTC 12712 / WDCM 00102 / Lb 14) protein is Large ribosomal subunit protein bL35.